The following is a 297-amino-acid chain: Tyrosine recombinase XerD (297 aa).

One can recognise a Core-binding (CB) domain in the interval 1–86 (MKNLALIDLF…AMRKLFQYLY (86 aa)). The Tyr recombinase domain maps to 107 to 291 (RLPKYLTEQQ…AKERLKRLHE (185 aa)). Residues arginine 147, lysine 171, histidine 243, arginine 246, and histidine 269 contribute to the active site. The active-site O-(3'-phospho-DNA)-tyrosine intermediate is the tyrosine 278.

The protein belongs to the 'phage' integrase family. XerD subfamily. As to quaternary structure, forms a cyclic heterotetrameric complex composed of two molecules of XerC and two molecules of XerD.

The protein resides in the cytoplasm. Its function is as follows. Site-specific tyrosine recombinase, which acts by catalyzing the cutting and rejoining of the recombining DNA molecules. The XerC-XerD complex is essential to convert dimers of the bacterial chromosome into monomers to permit their segregation at cell division. It also contributes to the segregational stability of plasmids. This chain is Tyrosine recombinase XerD, found in Haemophilus influenzae (strain ATCC 51907 / DSM 11121 / KW20 / Rd).